Here is a 331-residue protein sequence, read N- to C-terminus: 4-hydroxythreonine-4-phosphate dehydrogenase (331 aa).

Residues His136 and Thr137 each contribute to the substrate site. Residues His166, His211, and His266 each contribute to the a divalent metal cation site. Substrate contacts are provided by Lys274, Asn283, and Arg292.

Belongs to the PdxA family. Homodimer. The cofactor is Zn(2+). Requires Mg(2+) as cofactor. Co(2+) is required as a cofactor.

Its subcellular location is the cytoplasm. It catalyses the reaction 4-(phosphooxy)-L-threonine + NAD(+) = 3-amino-2-oxopropyl phosphate + CO2 + NADH. It participates in cofactor biosynthesis; pyridoxine 5'-phosphate biosynthesis; pyridoxine 5'-phosphate from D-erythrose 4-phosphate: step 4/5. Catalyzes the NAD(P)-dependent oxidation of 4-(phosphooxy)-L-threonine (HTP) into 2-amino-3-oxo-4-(phosphooxy)butyric acid which spontaneously decarboxylates to form 3-amino-2-oxopropyl phosphate (AHAP). This is 4-hydroxythreonine-4-phosphate dehydrogenase from Thioalkalivibrio sulfidiphilus (strain HL-EbGR7).